A 122-amino-acid polypeptide reads, in one-letter code: Small ribosomal subunit protein bS6 (122 aa).

Residues 99–122 (PSPMMKEVAREEAKKAAAQTEQAA) are disordered.

It belongs to the bacterial ribosomal protein bS6 family.

Functionally, binds together with bS18 to 16S ribosomal RNA. This chain is Small ribosomal subunit protein bS6, found in Ralstonia pickettii (strain 12J).